Here is a 298-residue protein sequence, read N- to C-terminus: Probable 2-(5''-triphosphoribosyl)-3'-dephosphocoenzyme-A synthase (298 aa).

The protein belongs to the CitG/MdcB family.

The enzyme catalyses 3'-dephospho-CoA + ATP = 2'-(5''-triphospho-alpha-D-ribosyl)-3'-dephospho-CoA + adenine. This chain is Probable 2-(5''-triphosphoribosyl)-3'-dephosphocoenzyme-A synthase, found in Salmonella arizonae (strain ATCC BAA-731 / CDC346-86 / RSK2980).